Consider the following 468-residue polypeptide: bZIP transcription factor 14 (468 aa).

Disordered regions lie at residues 55–149 and 234–272; these read SRRK…EGRA and SPQS…LGKD. Composition is skewed to low complexity over residues 64-82 and 95-106; these read SFVS…SSGS and VTAASTESVSSS. Residues 112–128 are compositionally biased toward basic and acidic residues; sequence KKADTDDRVQRSRERNR. The region spanning 117-165 is the bZIP 1 domain; that stretch reads DDRVQRSRERNRIHARKTRQRKKEQMQSLEGRATDLKHEQIRLKQIINE. The interval 119–139 is basic motif 1; the sequence is RVQRSRERNRIHARKTRQRKK. Positions 129–138 are enriched in basic residues; sequence IHARKTRQRK. Residues 145 to 159 form a leucine-zipper 1 region; it reads LEGRATDLKHEQIRL. Positions 247–256 are enriched in polar residues; that stretch reads ASTSDVSGDE. Residues 279–333 enclose the bZIP 2 domain; the sequence is EELDQIRRERNRMHAKRTRDRKRIFTEEMAEMCRILEEENHLLRVHLGGLDSDFK. The interval 285–312 is basic motif 2; the sequence is RRERNRMHAKRTRDRKRIFTEEMAEMCR. Residues 313–320 are leucine-zipper 2; it reads ILEEENHL. Residues 400–468 form a disordered region; that stretch reads ERQQREAERK…TTSLAAPVGW (69 aa). The span at 401 to 410 shows a compositional bias: basic and acidic residues; that stretch reads RQQREAERKV. Residues 417-426 are compositionally biased toward low complexity; sequence SAASDTSTSD.

It belongs to the bZIP family.

It is found in the nucleus. Transcriptional activator which binds to the C-box-like motif 5'-TGACGT-3' and A-box-like motif 5'-GTACGTA-3' of target promoters to positively regulate the expression of genes involved in the tricarboxylic acid (TCA) cycle in response to nitrogen starvation. May also regulate the TCA cycle during day-to-night transitions. The chain is bZIP transcription factor 14 from Phaeodactylum tricornutum (strain CCAP 1055/1).